The primary structure comprises 99 residues: Small integral membrane protein 14 (99 aa).

Residues 1-49 (MAEGGFDPCECVCSHEHAMRRLINLLRQSQSYCTDTECLQELPGPSGDN) are Lumenal-facing. The chain crosses the membrane as a helical span at residues 50–70 (GISVTMILVAWMVIALILFLL). Residues 71-99 (RPPNLRGSSLPGKPTSPHNGQDPPAPPVD) are Cytoplasmic-facing. Positions 78 to 99 (SSLPGKPTSPHNGQDPPAPPVD) are disordered.

It localises to the endoplasmic reticulum membrane. The chain is Small integral membrane protein 14 (SMIM14) from Homo sapiens (Human).